The chain runs to 380 residues: Glutamine synthetase, chloroplastic (380 aa).

A GS beta-grasp domain is found at 35-125; that stretch reads MAAEYIWADG…VMCEVFAPDG (91 aa). The 249-residue stretch at 132–380 folds into the GS catalytic domain; the sequence is TRAKLREIID…RLLIKTVLKG (249 aa).

This sequence belongs to the glutamine synthetase family. As to quaternary structure, homooctamer.

The protein resides in the plastid. The protein localises to the chloroplast. The enzyme catalyses L-glutamate + NH4(+) + ATP = L-glutamine + ADP + phosphate + H(+). The chain is Glutamine synthetase, chloroplastic (GLN2) from Chlamydomonas reinhardtii (Chlamydomonas smithii).